The primary structure comprises 913 residues: Isoleucine--tRNA ligase (913 aa).

The 'HIGH' region motif lies at 57-67 (PYANGDIHLGT). An L-isoleucyl-5'-AMP-binding site is contributed by E549. A 'KMSKS' region motif is present at residues 590-594 (KMSKS). K593 contacts ATP. Positions 881, 884, 901, and 904 each coordinate Zn(2+).

The protein belongs to the class-I aminoacyl-tRNA synthetase family. IleS type 1 subfamily. As to quaternary structure, monomer. Zn(2+) serves as cofactor.

It localises to the cytoplasm. The catalysed reaction is tRNA(Ile) + L-isoleucine + ATP = L-isoleucyl-tRNA(Ile) + AMP + diphosphate. Functionally, catalyzes the attachment of isoleucine to tRNA(Ile). As IleRS can inadvertently accommodate and process structurally similar amino acids such as valine, to avoid such errors it has two additional distinct tRNA(Ile)-dependent editing activities. One activity is designated as 'pretransfer' editing and involves the hydrolysis of activated Val-AMP. The other activity is designated 'posttransfer' editing and involves deacylation of mischarged Val-tRNA(Ile). The protein is Isoleucine--tRNA ligase of Fervidobacterium nodosum (strain ATCC 35602 / DSM 5306 / Rt17-B1).